Here is a 151-residue protein sequence, read N- to C-terminus: 1,4-dihydroxy-2-naphthoyl-CoA hydrolase (151 aa).

Asp19 is a catalytic residue.

Belongs to the 4-hydroxybenzoyl-CoA thioesterase family. DHNA-CoA hydrolase subfamily.

It carries out the reaction 1,4-dihydroxy-2-naphthoyl-CoA + H2O = 1,4-dihydroxy-2-naphthoate + CoA + H(+). It functions in the pathway cofactor biosynthesis; phylloquinone biosynthesis. The protein operates within quinol/quinone metabolism; 1,4-dihydroxy-2-naphthoate biosynthesis; 1,4-dihydroxy-2-naphthoate from chorismate: step 7/7. In terms of biological role, catalyzes the hydrolysis of 1,4-dihydroxy-2-naphthoyl-CoA (DHNA-CoA) to 1,4-dihydroxy-2-naphthoate (DHNA), a reaction involved in phylloquinone (vitamin K1) biosynthesis. This chain is 1,4-dihydroxy-2-naphthoyl-CoA hydrolase, found in Prochlorococcus marinus (strain MIT 9313).